We begin with the raw amino-acid sequence, 311 residues long: Glutaminase (311 aa).

Substrate-binding residues include Ser-66, Asn-116, Glu-162, Asn-169, Tyr-193, Tyr-245, and Val-263.

Belongs to the glutaminase family. In terms of assembly, homotetramer.

The enzyme catalyses L-glutamine + H2O = L-glutamate + NH4(+). This is Glutaminase from Rhodopseudomonas palustris (strain ATCC BAA-98 / CGA009).